A 283-amino-acid polypeptide reads, in one-letter code: Urease accessory protein UreD (283 aa).

The tract at residues 1 to 21 (MTQTQPVGTLRLTIDDQGPQG) is disordered.

It belongs to the UreD family. In terms of assembly, ureD, UreF and UreG form a complex that acts as a GTP-hydrolysis-dependent molecular chaperone, activating the urease apoprotein by helping to assemble the nickel containing metallocenter of UreC. The UreE protein probably delivers the nickel.

It is found in the cytoplasm. Functionally, probably acts in the maturation of urease via the functional incorporation of the urease nickel metallocenter. Required for urease expression. The polypeptide is Urease accessory protein UreD (Corynebacterium glutamicum (strain ATCC 13032 / DSM 20300 / JCM 1318 / BCRC 11384 / CCUG 27702 / LMG 3730 / NBRC 12168 / NCIMB 10025 / NRRL B-2784 / 534)).